Here is a 181-residue protein sequence, read N- to C-terminus: Urease accessory protein UreE (181 aa).

A disordered region spans residues 143–181 (FDPEPGAYNQAGQGHSHGHSHGHSHNHDHEHSHGHKHAH).

This sequence belongs to the UreE family.

Its subcellular location is the cytoplasm. Its function is as follows. Involved in urease metallocenter assembly. Binds nickel. Probably functions as a nickel donor during metallocenter assembly. The polypeptide is Urease accessory protein UreE (Marinobacter nauticus (strain ATCC 700491 / DSM 11845 / VT8) (Marinobacter aquaeolei)).